Reading from the N-terminus, the 204-residue chain is MNKLRNQTLALASILQTTTLVDQLASTGACDANSNQASLKSIITSSTKLEEVFNSKQDLLVGIAALKVVLGNKTKRIQQVILYALALINLEKKLMKNQTLLNQITLEIDLIKNQEFFEISHANSVARLAQLYKSTLGGLNPRIMINGEQIYLSNKHTTNHIRALLLAGIRAVSLWKSQGGKTWHLLFNKKKILNLISSLEGLNK.

Belongs to the HflD family.

It localises to the cytoplasm. It is found in the cell inner membrane. The polypeptide is High frequency lysogenization protein HflD homolog (Ruthia magnifica subsp. Calyptogena magnifica).